The sequence spans 161 residues: Lincosamide resistance protein (161 aa).

The polypeptide is Lincosamide resistance protein (linA) (Staphylococcus haemolyticus).